The chain runs to 176 residues: Ribosome maturation factor RimM (176 aa).

Residues Glu-97–Phe-176 form the PRC barrel domain.

The protein belongs to the RimM family. As to quaternary structure, binds ribosomal protein uS19.

Its subcellular location is the cytoplasm. An accessory protein needed during the final step in the assembly of 30S ribosomal subunit, possibly for assembly of the head region. Essential for efficient processing of 16S rRNA. May be needed both before and after RbfA during the maturation of 16S rRNA. It has affinity for free ribosomal 30S subunits but not for 70S ribosomes. In Colwellia psychrerythraea (strain 34H / ATCC BAA-681) (Vibrio psychroerythus), this protein is Ribosome maturation factor RimM.